Reading from the N-terminus, the 388-residue chain is Chorismate synthase (388 aa).

Arg-40 and Arg-46 together coordinate NADP(+). FMN contacts are provided by residues 131 to 133, 252 to 253, Gly-296, 311 to 315, and Arg-337; these read RSS, NA, and KPIPT.

This sequence belongs to the chorismate synthase family. Homotetramer. Requires FMNH2 as cofactor.

It catalyses the reaction 5-O-(1-carboxyvinyl)-3-phosphoshikimate = chorismate + phosphate. The protein operates within metabolic intermediate biosynthesis; chorismate biosynthesis; chorismate from D-erythrose 4-phosphate and phosphoenolpyruvate: step 7/7. In terms of biological role, catalyzes the anti-1,4-elimination of the C-3 phosphate and the C-6 proR hydrogen from 5-enolpyruvylshikimate-3-phosphate (EPSP) to yield chorismate, which is the branch point compound that serves as the starting substrate for the three terminal pathways of aromatic amino acid biosynthesis. This reaction introduces a second double bond into the aromatic ring system. In Limosilactobacillus fermentum (strain NBRC 3956 / LMG 18251) (Lactobacillus fermentum), this protein is Chorismate synthase.